A 1071-amino-acid polypeptide reads, in one-letter code: Fused isobutyryl-CoA mutase (1071 aa).

Residues 12–149 (PVRFVTSAAL…QTCDVDLTGE (138 aa)) enclose the B12-binding domain. His-25 contacts adenosylcob(III)alamin. A GTPase chaperone MeaI region spans residues 153–400 (VEAVLAGERT…YQHLLELLGA (248 aa)). 203–208 (GSGKSS) lines the GTP pocket. Positions 207, 232, 233, and 246 each coordinate Mg(2+). Position 249 (Arg-249) interacts with GTP. Residues Glu-293 and Thr-294 each coordinate Mg(2+). 340-343 (NKFE) serves as a coordination point for GTP. Residues 401–558 (RGLPVDEGVL…RSENLPGHFP (158 aa)) are linker. Substrate is bound by residues Phe-566, Arg-601, Arg-707, Tyr-751, Ser-800, Arg-835, and Lys-840. GTP-binding residues include Glu-952 and Asn-1070.

The protein belongs to the IcmF family. As to quaternary structure, homodimer. The cofactor is adenosylcob(III)alamin. It depends on Mg(2+) as a cofactor.

The enzyme catalyses 2-methylpropanoyl-CoA = butanoyl-CoA. The catalysed reaction is GTP + H2O = GDP + phosphate + H(+). Its function is as follows. Catalyzes the reversible interconversion of isobutyryl-CoA and n-butyryl-CoA, using radical chemistry. Also exhibits GTPase activity, associated with its G-protein domain (MeaI) that functions as a chaperone that assists cofactor delivery and proper holo-enzyme assembly. Does not exhibit methylmalonyl-CoA mutase (MCM) activity. In Nocardia farcinica (strain IFM 10152), this protein is Fused isobutyryl-CoA mutase.